Reading from the N-terminus, the 683-residue chain is Zinc finger protein 510 (683 aa).

A KRAB domain is found at Val-46–Pro-117. The segment at Phe-254–His-276 adopts a C2H2-type 1; degenerate zinc-finger fold. C2H2-type zinc fingers lie at residues Tyr-404–His-426, Phe-432–His-454, Tyr-460–His-482, Tyr-488–His-510, Phe-516–His-538, Tyr-544–His-566, Phe-572–His-594, Phe-600–His-622, and Phe-628–His-650.

The protein belongs to the krueppel C2H2-type zinc-finger protein family.

It localises to the nucleus. May be involved in transcriptional regulation. The sequence is that of Zinc finger protein 510 (ZNF510) from Homo sapiens (Human).